Consider the following 193-residue polypeptide: uncharacterized protein (193 aa).

A helical membrane pass occupies residues 153-170; that stretch reads WRYWAVIALIAAVLIYLY.

The protein localises to the membrane. This is an uncharacterized protein from Invertebrate iridescent virus 6 (IIV-6).